We begin with the raw amino-acid sequence, 203 residues long: Dephospho-CoA kinase (203 aa).

In terms of domain architecture, DPCK spans 3–201 (SVGLTGGIGS…QRYLGYAAAA (199 aa)). Residue 11 to 16 (GSGKTT) participates in ATP binding.

Belongs to the CoaE family.

It localises to the cytoplasm. The enzyme catalyses 3'-dephospho-CoA + ATP = ADP + CoA + H(+). It functions in the pathway cofactor biosynthesis; coenzyme A biosynthesis; CoA from (R)-pantothenate: step 5/5. Functionally, catalyzes the phosphorylation of the 3'-hydroxyl group of dephosphocoenzyme A to form coenzyme A. This chain is Dephospho-CoA kinase, found in Burkholderia thailandensis (strain ATCC 700388 / DSM 13276 / CCUG 48851 / CIP 106301 / E264).